The sequence spans 453 residues: Sialic acid-binding Ig-like lectin 6 (453 aa).

The N-terminal stretch at 1-26 (MQGAQEASASEMLPLLLPLLWAGALA) is a signal peptide. The Extracellular segment spans residues 27-347 (QERRFQLEGP…WKPEGRAGGV (321 aa)). The 96-residue stretch at 28-123 (ERRFQLEGPE…RDNAAYFFRL (96 aa)) folds into the Ig-like V-type domain. Cystine bridges form between Cys46/Cys172, Cys51/Cys104, and Cys166/Cys215. An N-linked (GlcNAc...) asparagine glycan is attached at Asn103. Arg122 serves as a coordination point for N-acetylneuraminate. In terms of domain architecture, Ig-like C2-type 1 spans 148–231 (PNISIPGTLE…AGVTMERTIQ (84 aa)). Asn149 and Asn163 each carry an N-linked (GlcNAc...) asparagine glycan. N-linked (GlcNAc...) asparagine glycosylation is present at Asn233. Residues 238-333 (PQKVAISIFQ…PLGSLQISLS (96 aa)) enclose the Ig-like C2-type 2 domain. Cys274 and Cys319 are disulfide-bonded. A helical transmembrane segment spans residues 348 to 368 (LGAVWGASITTLVFLCVCFIF). At 369-453 (RVKTRRKKAA…TEYSEIKIHK (85 aa)) the chain is on the cytoplasmic side. The short motif at 424–429 (LHYAVL) is the ITIM motif element. Residues 444–449 (TEYSEI) carry the SLAM-like motif motif.

It belongs to the immunoglobulin superfamily. SIGLEC (sialic acid binding Ig-like lectin) family. In terms of assembly, interacts with LEP. In terms of tissue distribution, expressed at high levels in placenta (cyto- and syncytiotrophoblastic cells) and at lower levels in spleen, peripheral blood leukocytes (predominantly B-cells) and small intestine.

Its subcellular location is the cell membrane. It is found in the secreted. Its function is as follows. Putative adhesion molecule that mediates sialic-acid dependent binding to cells. Binds to alpha-2,6-linked sialic acid. The sialic acid recognition site may be masked by cis interactions with sialic acids on the same cell surface. This chain is Sialic acid-binding Ig-like lectin 6 (SIGLEC6), found in Homo sapiens (Human).